Consider the following 560-residue polypeptide: S100P-binding protein (560 aa).

Disordered regions lie at residues 259 to 292 (SDIP…ESTP) and 313 to 400 (SSSS…GKSF). Positions 313–352 (SSSSLQLPETSLASSTEPSPSLQLSASSVTAMNGQNNSNK) are enriched in polar residues. Basic and acidic residues predominate over residues 378–387 (QKVEPKKNKP).

Its subcellular location is the nucleus. In Xenopus laevis (African clawed frog), this protein is S100P-binding protein (s100pbp).